The following is a 104-amino-acid chain: Fusaric acid biosynthesis protein 2 (104 aa).

The protein belongs to the YciI family.

It participates in mycotoxin biosynthesis. Its function is as follows. Part of the gene cluster that mediates the biosynthesis of fusaric acid, a mycotoxin with low to moderate toxicity to animals and humans, but with high phytotoxic properties. L-aspartate is suggested as fusaric acid amino acid precursor that is activated and further processed to O-acetyl-L-homoserine by cluster enzymes aspartate kinase FUB3 and homoserine O-acetyltransferase FUB5, as well as enzymes of the primary metabolism. The polyketide synthase (PKS) FUB1 generates the triketide trans-2-hexenal which is presumptively released by the hydrolase FUB4 and linked to the NRPS-bound amino acid precursor by NAD(P)-dependent dehydrogenase FUB6. FUB1, FUB4, and the non-canonical NRPS Fub8 may form an enzyme complex. Further processing of the NRPS-bound intermediate might be carried out by FUB6 and the sulfhydrylase FUB7, enabling a spontaneous electrocyclization to close the carbon backbone of fusaric acid. Dihydrofusaric acid is likely to be released via reduction by the thioester reductase (TR) domain of FUB8 whereupon the final oxidation to fusaric acid may (also) be performed by the FMN-dependent dehydrogenase FUB9. The protein is Fusaric acid biosynthesis protein 2 of Gibberella fujikuroi (strain CBS 195.34 / IMI 58289 / NRRL A-6831) (Bakanae and foot rot disease fungus).